Consider the following 169-residue polypeptide: Lipoprotein signal peptidase (169 aa).

4 helical membrane passes run 4-24, 29-49, 70-90, and 101-121; these read PICS…ILDI, WVMA…FNLT, WFFA…MYRS, and YALI…HGAV. Catalysis depends on residues Asp123 and Asp141. Residues 137-157 traverse the membrane as a helical segment; that stretch reads FNLADVAISIGAVLVIFEGFL.

Belongs to the peptidase A8 family.

The protein localises to the cell inner membrane. The enzyme catalyses Release of signal peptides from bacterial membrane prolipoproteins. Hydrolyzes -Xaa-Yaa-Zaa-|-(S,diacylglyceryl)Cys-, in which Xaa is hydrophobic (preferably Leu), and Yaa (Ala or Ser) and Zaa (Gly or Ala) have small, neutral side chains.. The protein operates within protein modification; lipoprotein biosynthesis (signal peptide cleavage). Functionally, this protein specifically catalyzes the removal of signal peptides from prolipoproteins. The polypeptide is Lipoprotein signal peptidase (Yersinia pseudotuberculosis serotype O:1b (strain IP 31758)).